A 2005-amino-acid polypeptide reads, in one-letter code: Sodium channel protein type 2 subunit alpha (2005 aa).

Over 1-129 the chain is Cytoplasmic; it reads MAQSVLVPPG…KLAIKILVHS (129 aa). Phosphoserine is present on serine 4. The disordered stretch occupies residues 28 to 61; that stretch reads RIAEEKAKRPKQERKDEDDENGPKPNSDLEAGKS. A Glycyl lysine isopeptide (Lys-Gly) (interchain with G-Cter in SUMO1) cross-link involves residue lysine 38. The I repeat unit spans residues 111–456; sequence ILTPFNPIRK…QQMLEQLKKQ (346 aa). Residues 130 to 148 traverse the membrane as a helical segment; that stretch reads LFNMLIMCTILTNCVFMTM. Topologically, residues 149 to 155 are extracellular; that stretch reads SNPPDWT. The helical transmembrane segment at 156–176 threads the bilayer; that stretch reads KNVEYTFTGIYTFESLIKILA. Over 177–190 the chain is Cytoplasmic; it reads RGFCLEDFTFLRDP. Residues 191 to 208 traverse the membrane as a helical segment; that stretch reads WNWLDFTVITFAYVTEFV. Topologically, residues 209 to 214 are extracellular; sequence DLGNVS. N-linked (GlcNAc...) asparagine glycosylation is present at asparagine 212. The helical transmembrane segment at 215–231 threads the bilayer; the sequence is ALRTFRVLRALKTISVI. Topologically, residues 232–250 are cytoplasmic; sequence PGLKTIVGALIQSVKKLSD. A helical membrane pass occupies residues 251 to 270; sequence VMILTVFCLSVFALIGLQLF. Residues 271 to 369 are Extracellular-facing; that stretch reads MGNLRNKCLQ…PNYGYTSFDT (99 aa). Cysteine 278 and cysteine 338 are oxidised to a cystine. N-linked (GlcNAc...) asparagine glycans are attached at residues asparagine 285, asparagine 291, asparagine 297, asparagine 303, asparagine 308, and asparagine 340. Residues 370-394 constitute an intramembrane region (pore-forming); sequence FSWAFLSLFRLMTQDFWENLYQLTL. The Extracellular segment spans residues 395 to 401; it reads RAAGKTY. Residues 402–422 form a helical membrane-spanning segment; sequence MIFFVLVIFLGSFYLINLILA. The Cytoplasmic segment spans residues 423 to 759; sequence VVAMAYEEQN…HLVNLVVMDP (337 aa). Phosphoserine is present on residues serine 468, serine 471, serine 484, serine 526, serine 528, serine 531, serine 553, serine 554, serine 558, serine 573, serine 576, serine 589, serine 610, serine 623, serine 686, serine 687, and serine 721. The tract at residues 494–529 is disordered; it reads SSKSEKELKNRRKKKKQKEQSGEEEKNDRVRKSESE. Basic and acidic residues predominate over residues 511-529; it reads KEQSGEEEKNDRVRKSESE. The segment at 590–610 is disordered; sequence ENDFADDEHSTFEDNDSRRDS. Positions 596–610 are enriched in basic and acidic residues; sequence DEHSTFEDNDSRRDS. An II repeat occupies 741 to 1013; sequence CCKPWLKVKH…QIAVGRMQKG (273 aa). The helical transmembrane segment at 760 to 778 threads the bilayer; it reads FVDLAITICIVLNTLFMAM. The Extracellular portion of the chain corresponds to 779 to 789; the sequence is EHYPMTEQFSS. Residues 790-809 form a helical membrane-spanning segment; the sequence is VLSVGNLVFTGIFTAEMFLK. At 810–823 the chain is on the cytoplasmic side; the sequence is IIAMDPYYYFQEGW. The helical transmembrane segment at 824–843 threads the bilayer; sequence NIFDGFIVSLSLMELGLANV. The Extracellular portion of the chain corresponds to 844–845; it reads EG. A helical membrane pass occupies residues 846–863; it reads LSVLRSFRLLRVFKLAKS. The Cytoplasmic segment spans residues 864-879; that stretch reads WPTLNMLIKIIGNSVG. The helical transmembrane segment at 880–898 threads the bilayer; sequence ALGNLTLVLAIIVFIFAVV. The Extracellular portion of the chain corresponds to 899–927; that stretch reads GMQLFGKSYKECVCKISNDCELPRWHMHD. Cysteine 912 and cysteine 918 are oxidised to a cystine. The interval 917–918 is binds SCN2B; that stretch reads DC. Positions 928-948 form an intramembrane region, pore-forming; the sequence is FFHSFLIVFRVLCGEWIETMW. Residues 949 to 961 are Extracellular-facing; that stretch reads DCMEVAGQTMCLT. Residues cysteine 950 and cysteine 959 are joined by a disulfide bond. A helical membrane pass occupies residues 962–982; that stretch reads VFMMVMVIGNLVVLNLFLALL. The Cytoplasmic segment spans residues 983 to 1209; that stretch reads LSSFSSDNLA…TCYKIVEHNW (227 aa). The segment at 1120-1165 is disordered; that stretch reads EEFSSESDMEESKEKLNATSSSEGSTVDIGAPAEGEQPEVEPEESL. The segment covering 1155–1165 has biased composition (acidic residues); sequence EQPEVEPEESL. An III repeat occupies 1190 to 1504; the sequence is KGKLWWNLRK…KKYYNAMKKL (315 aa). A helical transmembrane segment spans residues 1210–1227; sequence FETFIVFMILLSSGALAF. At 1228–1240 the chain is on the extracellular side; it reads EDIYIEQRKTIKT. Residues 1241 to 1259 form a helical membrane-spanning segment; the sequence is MLEYADKVFTYIFILEMLL. Topologically, residues 1260–1273 are cytoplasmic; sequence KWVAYGFQVYFTNA. A helical membrane pass occupies residues 1274 to 1292; it reads WCWLDFLIVDVSLVSLTAN. Topologically, residues 1293–1300 are extracellular; it reads ALGYSELG. The chain crosses the membrane as a helical span at residues 1301–1319; it reads AIKSLRTLRALRPLRALSR. Residues 1320 to 1336 lie on the Cytoplasmic side of the membrane; sequence FEGMRVVVNALLGAIPS. The chain crosses the membrane as a helical span at residues 1337 to 1356; it reads IMNVLLVCLIFWLIFSIMGV. The Extracellular portion of the chain corresponds to 1357 to 1408; the sequence is NLFAGKFYHCINYTTGEMFDVSVVNNYSECKALIESNQTARWKNVKVNFDNV. Cysteine 1366 and cysteine 1386 are oxidised to a cystine. N-linked (GlcNAc...) asparagine glycans are attached at residues asparagine 1368, asparagine 1382, and asparagine 1393. The pore-forming intramembrane region spans 1409 to 1430; sequence GLGYLSLLQVATFKGWMDIMYA. The Extracellular portion of the chain corresponds to 1431 to 1447; the sequence is AVDSRNVELQPKYEDNL. Residues 1448–1469 traverse the membrane as a helical segment; sequence YMYLYFVIFIIFGSFFTLNLFI. The Cytoplasmic segment spans residues 1470 to 1532; the sequence is GVIIDNFNQQ…MVFDFVTKQV (63 aa). A Phosphoserine; by PKC modification is found at serine 1506. Residues 1513–1811 form an IV repeat; the sequence is IPRPANKFQG…WEKFDPDATQ (299 aa). Residues 1533–1550 form a helical membrane-spanning segment; it reads FDISIMILICLNMVTMMV. At 1551-1561 the chain is on the extracellular side; it reads ETDDQSQEMTN. A helical transmembrane segment spans residues 1562 to 1580; the sequence is ILYWINLVFIVLFTGECVL. Over 1581-1592 the chain is Cytoplasmic; the sequence is KLISLRYYYFTI. The chain crosses the membrane as a helical span at residues 1593–1610; the sequence is GWNIFDFVVVILSIVGMF. Topologically, residues 1611 to 1623 are extracellular; sequence LAELIEKYFVSPT. Residues 1624–1640 traverse the membrane as a helical segment; it reads LFRVIRLARIGRILRLI. Topologically, residues 1641–1659 are cytoplasmic; sequence KGAKGIRTLLFALMMSLPA. A helical transmembrane segment spans residues 1660–1677; it reads LFNIGLLLFLVMFIYAIF. At 1678-1699 the chain is on the extracellular side; that stretch reads GMSNFAYVKREVGIDDMFNFET. The segment at residues 1700 to 1722 is an intramembrane region (pore-forming); it reads FGNSMICLFQITTSAGWDGLLAP. The Extracellular portion of the chain corresponds to 1723–1752; sequence ILNSGPPDCDPDKDHPGSSVKGDCGNPSVG. Cysteines 1731 and 1746 form a disulfide. Residues 1753 to 1775 traverse the membrane as a helical segment; that stretch reads IFFFVSYIIISFLVVVNMYIAVI. Over 1776–2005 the chain is Cytoplasmic; the sequence is LENFSVATEE…KGKDIRESKK (230 aa). The region spanning 1905–1934 is the IQ domain; the sequence is EEVSAIIIQRAYRRYLLKQKVKKVSSIYKK. Serine 1930 is modified (phosphoserine). A compositionally biased stretch (basic and acidic residues) spans 1935-1964; sequence DKGKECDGTPIKEDTLIDKLNENSTPEKTD. The interval 1935 to 2005 is disordered; it reads DKGKECDGTP…KGKDIRESKK (71 aa). 3 positions are modified to phosphothreonine: threonine 1943, threonine 1963, and threonine 1966. The residue at position 1971 (serine 1971) is a Phosphoserine. The segment covering 1979 to 2005 has biased composition (basic and acidic residues); sequence TKPEKEKFEKDKSEKEDKGKDIRESKK.

Belongs to the sodium channel (TC 1.A.1.10) family. Nav1.2/SCN2A subfamily. As to quaternary structure, heterooligomer of a large alpha subunit and a smaller beta subunit. Heterooligomer with SCN2B or SCN4B; disulfide-linked. Heterooligomer with SCN1B or SCN3B; non-covalently linked. Interacts with NEDD4L. Interacts with CALM. Interacts with TMEM233. Interacts with the conotoxin GVIIJ. Interacts with the spider beta/delta-theraphotoxin-Pre1a. Interacts with the conotoxin KIIIA. Interacts with the spider protoxin-II. In terms of processing, may be ubiquitinated by NEDD4L; which would promote its endocytosis. Post-translationally, phosphorylation at Ser-1506 by PKC in a highly conserved cytoplasmic loop slows inactivation of the sodium channel and reduces peak sodium currents. Sumoylated at Lys-38. Sumoylation is induced by hypoxia, increases voltage-gated sodium current and mediates the early response to acute hypoxia in neurons. Sumoylated SCN2A is located at the cell membrane.

The protein resides in the cell membrane. It carries out the reaction Na(+)(in) = Na(+)(out). In terms of biological role, mediates the voltage-dependent sodium ion permeability of excitable membranes. Assuming opened or closed conformations in response to the voltage difference across the membrane, the protein forms a sodium-selective channel through which Na(+) ions may pass in accordance with their electrochemical gradient. Implicated in the regulation of hippocampal replay occurring within sharp wave ripples (SPW-R) important for memory. In Homo sapiens (Human), this protein is Sodium channel protein type 2 subunit alpha.